Here is a 557-residue protein sequence, read N- to C-terminus: Trigger factor (557 aa).

The region spanning glycine 169–proline 255 is the PPIase FKBP-type domain. The tract at residues tryptophan 438–lysine 557 is disordered. The span at serine 455–serine 466 shows a compositional bias: basic and acidic residues.

This sequence belongs to the FKBP-type PPIase family. Tig subfamily.

It is found in the cytoplasm. The enzyme catalyses [protein]-peptidylproline (omega=180) = [protein]-peptidylproline (omega=0). In terms of biological role, involved in protein export. Acts as a chaperone by maintaining the newly synthesized protein in an open conformation. Functions as a peptidyl-prolyl cis-trans isomerase. The sequence is that of Trigger factor from Synechococcus sp. (strain JA-3-3Ab) (Cyanobacteria bacterium Yellowstone A-Prime).